The sequence spans 240 residues: Ribonuclease 3 (240 aa).

The 131-residue stretch at 4–134 folds into the RNase III domain; that stretch reads SRQPLLDALG…LLGAIYLQHG (131 aa). Residue Glu44 coordinates Mg(2+). Residue Asp48 is part of the active site. The Mg(2+) site is built by Asp120 and Glu123. The active site involves Glu123. The DRBM domain maps to 161 to 229; it reads DWKTSLQELT…AAAAWKALEV (69 aa).

It belongs to the ribonuclease III family. As to quaternary structure, homodimer. It depends on Mg(2+) as a cofactor.

It localises to the cytoplasm. It catalyses the reaction Endonucleolytic cleavage to 5'-phosphomonoester.. Its function is as follows. Digests double-stranded RNA. Involved in the processing of primary rRNA transcript to yield the immediate precursors to the large and small rRNAs (23S and 16S). Processes some mRNAs, and tRNAs when they are encoded in the rRNA operon. Processes pre-crRNA and tracrRNA of type II CRISPR loci if present in the organism. The protein is Ribonuclease 3 of Mycobacterium bovis (strain ATCC BAA-935 / AF2122/97).